Consider the following 107-residue polypeptide: Large ribosomal subunit protein uL24 (107 aa).

The protein belongs to the universal ribosomal protein uL24 family. In terms of assembly, part of the 50S ribosomal subunit.

One of two assembly initiator proteins, it binds directly to the 5'-end of the 23S rRNA, where it nucleates assembly of the 50S subunit. Its function is as follows. One of the proteins that surrounds the polypeptide exit tunnel on the outside of the subunit. The chain is Large ribosomal subunit protein uL24 from Streptomyces coelicolor (strain ATCC BAA-471 / A3(2) / M145).